We begin with the raw amino-acid sequence, 511 residues long: ATP synthase subunit alpha 1 (511 aa).

Gly-174–Thr-181 is a binding site for ATP.

It belongs to the ATPase alpha/beta chains family. As to quaternary structure, F-type ATPases have 2 components, CF(1) - the catalytic core - and CF(0) - the membrane proton channel. CF(1) has five subunits: alpha(3), beta(3), gamma(1), delta(1), epsilon(1). CF(0) has four main subunits: a(1), b(1), b'(1) and c(9-12).

The protein localises to the cell inner membrane. It carries out the reaction ATP + H2O + 4 H(+)(in) = ADP + phosphate + 5 H(+)(out). Its function is as follows. Produces ATP from ADP in the presence of a proton gradient across the membrane. The alpha chain is a regulatory subunit. In Chlorobium luteolum (strain DSM 273 / BCRC 81028 / 2530) (Pelodictyon luteolum), this protein is ATP synthase subunit alpha 1.